The chain runs to 140 residues: MGRIIAIDYGRKRTGIAATDILQMIANGVATVPSGEVVKYLSDYISREPVDLFVVGLRKQMNNEPSENMKYVEAFVTHLKRTIPSIPVTYYDERFTSVLAHKAMLEGGLKKKKRQDKGLVDEISAVIILQAYLESKKYQL.

It belongs to the YqgF nuclease family.

Its subcellular location is the cytoplasm. Functionally, could be a nuclease involved in processing of the 5'-end of pre-16S rRNA. In Parabacteroides distasonis (strain ATCC 8503 / DSM 20701 / CIP 104284 / JCM 5825 / NCTC 11152), this protein is Putative pre-16S rRNA nuclease.